The primary structure comprises 94 residues: Small ribosomal subunit protein uS19 (94 aa).

The protein belongs to the universal ribosomal protein uS19 family.

Protein S19 forms a complex with S13 that binds strongly to the 16S ribosomal RNA. The sequence is that of Small ribosomal subunit protein uS19 from Natranaerobius thermophilus (strain ATCC BAA-1301 / DSM 18059 / JW/NM-WN-LF).